The primary structure comprises 395 residues: Cuticlin-5 (395 aa).

A signal peptide spans 1–18; it reads MNFILAVFAIILLQAVRG. Residues 19-358 are Extracellular-facing; the sequence is EIDNAIVGDP…ELCMTAIGTT (340 aa). Positions 46–291 constitute a ZP domain; that stretch reads SCVGNFIIKV…DYCDVPSCPD (246 aa). 2 N-linked (GlcNAc...) asparagine glycosylation sites follow: asparagine 90 and asparagine 307. The chain crosses the membrane as a helical span at residues 359–379; sequence LLVFLNAFLFIISLVSIVHVC. Over 380–395 the chain is Cytoplasmic; sequence CFRTSPKLEKTKSTML.

The protein resides in the cell membrane. Functionally, plays a role in alae formation in L1 and dauer stage larvae. This chain is Cuticlin-5, found in Caenorhabditis elegans.